The primary structure comprises 250 residues: Coproheme decarboxylase (250 aa).

Residues arginine 131, 145 to 149 (YPMNK), histidine 172, and glutamine 185 contribute to the Fe-coproporphyrin III site. Residue tyrosine 145 is part of the active site.

Belongs to the ChdC family. Type 1 subfamily. The cofactor is Fe-coproporphyrin III.

The catalysed reaction is Fe-coproporphyrin III + 2 H2O2 + 2 H(+) = heme b + 2 CO2 + 4 H2O. It carries out the reaction Fe-coproporphyrin III + H2O2 + H(+) = harderoheme III + CO2 + 2 H2O. It catalyses the reaction harderoheme III + H2O2 + H(+) = heme b + CO2 + 2 H2O. Its pathway is porphyrin-containing compound metabolism; protoheme biosynthesis. In terms of biological role, involved in coproporphyrin-dependent heme b biosynthesis. Catalyzes the decarboxylation of Fe-coproporphyrin III (coproheme) to heme b (protoheme IX), the last step of the pathway. The reaction occurs in a stepwise manner with a three-propionate intermediate. This Staphylococcus aureus (strain bovine RF122 / ET3-1) protein is Coproheme decarboxylase.